A 287-amino-acid chain; its full sequence is Octanoyl-[GcvH]:protein N-octanoyltransferase (287 aa).

The 209-residue stretch at 45–253 folds into the BPL/LPL catalytic domain; it reads GESPATARSW…ELKELSGRLY (209 aa). The Acyl-thioester intermediate role is filled by cysteine 150.

It belongs to the octanoyltransferase LipL family.

It catalyses the reaction N(6)-octanoyl-L-lysyl-[glycine-cleavage complex H protein] + L-lysyl-[lipoyl-carrier protein] = N(6)-octanoyl-L-lysyl-[lipoyl-carrier protein] + L-lysyl-[glycine-cleavage complex H protein]. It participates in protein modification; protein lipoylation via endogenous pathway; protein N(6)-(lipoyl)lysine from octanoyl-[acyl-carrier-protein]. In terms of biological role, catalyzes the amidotransfer (transamidation) of the octanoyl moiety from octanoyl-GcvH to the lipoyl domain of the E2 subunit of lipoate-dependent enzymes. The chain is Octanoyl-[GcvH]:protein N-octanoyltransferase from Bacillus velezensis (strain DSM 23117 / BGSC 10A6 / LMG 26770 / FZB42) (Bacillus amyloliquefaciens subsp. plantarum).